We begin with the raw amino-acid sequence, 188 residues long: MSIKSDKWIRRMAEQHGMIEPFEPGQIRQQDGRKIISYGTSSYGYDIRCAREFKVFTNIHSTVVDPKNFDEKSFVDFEGDYCIIPPNSFALARTVEYFRIPRDVLTVCLGKSTYARCGIIVNVTPFEPEWEGYVTLEFSNTTPLPAKIYAGEGCAQVLFFQGDEECAVSYKDRNGKYQGQHGVTLPKA.

Residues 111–116 (KSTYAR), 135–137 (TLE), Gln-156, Tyr-170, and Gln-180 each bind dCTP. Glu-137 (proton donor/acceptor) is an active-site residue.

Belongs to the dCTP deaminase family. In terms of assembly, homotrimer.

It catalyses the reaction dCTP + H2O + H(+) = dUTP + NH4(+). It participates in pyrimidine metabolism; dUMP biosynthesis; dUMP from dCTP (dUTP route): step 1/2. Functionally, catalyzes the deamination of dCTP to dUTP. The polypeptide is dCTP deaminase (Acidovorax sp. (strain JS42)).